The sequence spans 595 residues: MSLQMDKIYVKVHELKFVNNLERNSHYVKIYWDDKKYKSQTKDGGCYIFNETFLIPITNIYDQKDQIIYVEIWESNLLNKQCAYTFFTLNSIKIGQIIKENITFIEVLKKCTLGLSINIVRNQKDILFFNIKELLPTFQDQEIINAVWKNEDEASIIKQLINLNTIDGITNIGNYKNSQNYNETLQKPKENISIYKSGEEIENSYIPSSTPEYVSHYIYKGAGENSSNYINKTKDTLFPTYLNNYAYNNNIKNVYDTPNGAHYSSNNNSGSNNAYSNFDHNINNSPKNNVPFSNSDNDKIFHYSRNYMPSPNSEKMLYFSCGNKKKALLIGIDYCGTQNELKGSINDAIITNELLIKKYNFYDSSMNILKLIDNQTNPNYRPTKRNILSALEWLVQDNNPGDIFFFFYSGHSYKKYDYTCIEKGGYNQTIVPCDFKTEGEIIDNDLHKYLIQPLKDGVKLVSFIDCPNSEGILNLGYKYKLKKEKWKETYNPFHVLADVTQFSYSKINEFPTEINLLEHVLITNNIEALTYHYMIQSIHSYINLYNKKKKKKIFLMSSQKFNIDRKFDFNHILKNSNSELGQQKNIIKWKKNKKK.

Active-site residues include histidine 411 and cysteine 466.

This sequence belongs to the peptidase C14B family. Monomer.

Its activity is regulated as follows. Activated by Ca(2+). Its function is as follows. Cysteine protease that cleaves specifically after arginine or lysine residues. This chain is Metacaspase-1, found in Plasmodium berghei (strain Anka).